Consider the following 412-residue polypeptide: uncharacterized protein (412 aa).

3 disordered regions span residues 150 to 171 (NTPG…QLGD), 177 to 196 (QITS…QQQQ), and 302 to 412 (QAQQ…PLNP). Residues 156 to 168 (QAQQQQQQQQQQQ) are compositionally biased toward low complexity. Polar residues-rich tracts occupy residues 177–187 (QITSSNNSGNS) and 310–321 (MGSSPTHSSPTI). Positions 335–345 (GGIINTNTNLN) are enriched in low complexity. Residues 350–363 (VSPNQPMPNSSPIL) show a composition bias toward polar residues. 2 stretches are compositionally biased toward low complexity: residues 364 to 373 (PTNASSVVPP) and 381 to 394 (TSNN…TTSP).

This is an uncharacterized protein from Dictyostelium discoideum (Social amoeba).